The following is a 191-amino-acid chain: CASP-like protein 2U4 (191 aa).

Topologically, residues 1–25 are cytoplasmic; sequence MGAYDGAEAPRAAPASTAANSRPSR. A helical transmembrane segment spans residues 26–46; the sequence is LLLLHSLLLRLVAVVLSILVI. The Extracellular segment spans residues 47 to 68; it reads AVMVHAKQRVMIFKAEWDNSKA. Residues 69 to 89 traverse the membrane as a helical segment; it reads FVALVTISAICLGYSFLQFIL. Residues 90–114 lie on the Cytoplasmic side of the membrane; that stretch reads SAFHLCSKSWKSPTKCWAWMNFIAD. A helical membrane pass occupies residues 115–135; sequence QILTYAMLGAAAAAAELAYIA. Residues 136-157 lie on the Extracellular side of the membrane; it reads KNGSSRAQWQPICSTFNTFCTR. Residue N137 is glycosylated (N-linked (GlcNAc...) asparagine). A helical transmembrane segment spans residues 158–178; that stretch reads AGASIILSFIAVLALANSSAI. Topologically, residues 179-191 are cytoplasmic; the sequence is SAYHLFRRPSSSV.

It belongs to the Casparian strip membrane proteins (CASP) family. As to quaternary structure, homodimer and heterodimers.

The protein localises to the cell membrane. This Selaginella moellendorffii (Spikemoss) protein is CASP-like protein 2U4.